The primary structure comprises 360 residues: Peptide chain release factor 1 (360 aa).

Residue Gln235 is modified to N5-methylglutamine. Basic and acidic residues predominate over residues Ala284–Thr293. A disordered region spans residues Ala284–Gln314.

This sequence belongs to the prokaryotic/mitochondrial release factor family. Post-translationally, methylated by PrmC. Methylation increases the termination efficiency of RF1.

It localises to the cytoplasm. Its function is as follows. Peptide chain release factor 1 directs the termination of translation in response to the peptide chain termination codons UAG and UAA. This Erwinia tasmaniensis (strain DSM 17950 / CFBP 7177 / CIP 109463 / NCPPB 4357 / Et1/99) protein is Peptide chain release factor 1.